Reading from the N-terminus, the 209-residue chain is Small ribosomal subunit protein uS4 (209 aa).

Residues Cys9, Cys12, Cys26, and Cys31 each contribute to the Zn(2+) site. The C4-type zinc finger occupies 9 to 31 (CRLCRREGVKLYLKGERCYSPKC). The 63-residue stretch at 100-162 (RLDNVVYRLG…RNLELIRQNL (63 aa)) folds into the S4 RNA-binding domain.

The protein belongs to the universal ribosomal protein uS4 family. In terms of assembly, part of the 30S ribosomal subunit. Contacts protein S5. The interaction surface between S4 and S5 is involved in control of translational fidelity. Requires Zn(2+) as cofactor.

Its function is as follows. One of the primary rRNA binding proteins, it binds directly to 16S rRNA where it helps nucleate assembly of the body and platform of the 30S subunit. This is Small ribosomal subunit protein uS4 (rpsD) from Thermus thermophilus (strain ATCC BAA-163 / DSM 7039 / HB27).